A 170-amino-acid chain; its full sequence is F107 fimbrial protein (170 aa).

The first 21 residues, Met1–Ala21, serve as a signal peptide directing secretion. Cysteines 37 and 78 form a disulfide.

The protein belongs to the fimbrial protein family.

The protein resides in the fimbrium. In terms of biological role, fimbriae (also called pili), polar filaments radiating from the surface of the bacterium to a length of 0.5-1.5 micrometers and numbering 100-300 per cell, enable bacteria to colonize the epithelium of specific host organs. The sequence is that of F107 fimbrial protein (fedA) from Escherichia coli.